The following is a 365-amino-acid chain: tRNA(Met) cytidine acetate ligase (365 aa).

ATP is bound by residues 7 to 20 (IAEF…HKYL), G96, N152, and R175.

This sequence belongs to the TmcAL family.

The protein localises to the cytoplasm. The catalysed reaction is cytidine(34) in elongator tRNA(Met) + acetate + ATP = N(4)-acetylcytidine(34) in elongator tRNA(Met) + AMP + diphosphate. Its function is as follows. Catalyzes the formation of N(4)-acetylcytidine (ac(4)C) at the wobble position of elongator tRNA(Met), using acetate and ATP as substrates. First activates an acetate ion to form acetyladenylate (Ac-AMP) and then transfers the acetyl group to tRNA to form ac(4)C34. The polypeptide is tRNA(Met) cytidine acetate ligase (Streptococcus pneumoniae (strain Hungary19A-6)).